The primary structure comprises 236 residues: Phosphoribosylaminoimidazole-succinocarboxamide synthase (236 aa).

Belongs to the SAICAR synthetase family.

The enzyme catalyses 5-amino-1-(5-phospho-D-ribosyl)imidazole-4-carboxylate + L-aspartate + ATP = (2S)-2-[5-amino-1-(5-phospho-beta-D-ribosyl)imidazole-4-carboxamido]succinate + ADP + phosphate + 2 H(+). It functions in the pathway purine metabolism; IMP biosynthesis via de novo pathway; 5-amino-1-(5-phospho-D-ribosyl)imidazole-4-carboxamide from 5-amino-1-(5-phospho-D-ribosyl)imidazole-4-carboxylate: step 1/2. In Pseudomonas paraeruginosa (strain DSM 24068 / PA7) (Pseudomonas aeruginosa (strain PA7)), this protein is Phosphoribosylaminoimidazole-succinocarboxamide synthase.